We begin with the raw amino-acid sequence, 129 residues long: Small ribosomal subunit protein uS11 (129 aa).

Belongs to the universal ribosomal protein uS11 family. As to quaternary structure, part of the 30S ribosomal subunit. Interacts with proteins S7 and S18. Binds to IF-3.

In terms of biological role, located on the platform of the 30S subunit, it bridges several disparate RNA helices of the 16S rRNA. Forms part of the Shine-Dalgarno cleft in the 70S ribosome. The chain is Small ribosomal subunit protein uS11 from Maricaulis maris (strain MCS10) (Caulobacter maris).